A 116-amino-acid chain; its full sequence is Putative iron-sulfur cluster insertion protein ErpA (116 aa).

Iron-sulfur cluster is bound by residues C44, C108, and C110.

The protein belongs to the HesB/IscA family. As to quaternary structure, homodimer. Iron-sulfur cluster is required as a cofactor.

Functionally, required for insertion of 4Fe-4S clusters. The polypeptide is Putative iron-sulfur cluster insertion protein ErpA (Thiobacillus denitrificans (strain ATCC 25259 / T1)).